Reading from the N-terminus, the 478-residue chain is UDP-glycosyltransferase 71B5 (478 aa).

UDP-alpha-D-glucose-binding positions include S280, 347–349 (APQ), 364–372 (HCGWNSILE), and 386–389 (YAEQ).

The protein belongs to the UDP-glycosyltransferase family.

In terms of biological role, possesses low quercetin 3-O-glucosyltransferase activity in vitro. The polypeptide is UDP-glycosyltransferase 71B5 (UGT71B5) (Arabidopsis thaliana (Mouse-ear cress)).